A 220-amino-acid chain; its full sequence is 7-cyano-7-deazaguanine synthase (220 aa).

10 to 20 (FSGGQDSTTCL) provides a ligand contact to ATP. Residues Cys186, Cys195, Cys198, and Cys201 each contribute to the Zn(2+) site.

It belongs to the QueC family. Homodimer. Requires Zn(2+) as cofactor.

It catalyses the reaction 7-carboxy-7-deazaguanine + NH4(+) + ATP = 7-cyano-7-deazaguanine + ADP + phosphate + H2O + H(+). Its pathway is purine metabolism; 7-cyano-7-deazaguanine biosynthesis. In terms of biological role, catalyzes the ATP-dependent conversion of 7-carboxy-7-deazaguanine (CDG) to 7-cyano-7-deazaguanine (preQ(0)). The polypeptide is 7-cyano-7-deazaguanine synthase (Bacillus cereus (strain ATCC 14579 / DSM 31 / CCUG 7414 / JCM 2152 / NBRC 15305 / NCIMB 9373 / NCTC 2599 / NRRL B-3711)).